Consider the following 355-residue polypeptide: Aromatic amino acid aminotransferase (355 aa).

Position 217 is an N6-(pyridoxal phosphate)lysine (Lys217).

Belongs to the class-II pyridoxal-phosphate-dependent aminotransferase family. In terms of assembly, homodimer. Requires pyridoxal 5'-phosphate as cofactor.

It catalyses the reaction an aromatic L-alpha-amino acid + 2-oxoglutarate = an aromatic oxo-acid + L-glutamate. Functionally, aminotransferase that catalyzes the conversion of aromatic amino acids and 2-oxoglutarate into corresponding aromatic oxo acids and L-glutamate. The protein is Aromatic amino acid aminotransferase of Mycolicibacterium paratuberculosis (strain ATCC BAA-968 / K-10) (Mycobacterium paratuberculosis).